A 331-amino-acid polypeptide reads, in one-letter code: Phosphoribosylformylglycinamidine cyclo-ligase (331 aa).

The protein belongs to the AIR synthase family.

The protein resides in the cytoplasm. The catalysed reaction is 2-formamido-N(1)-(5-O-phospho-beta-D-ribosyl)acetamidine + ATP = 5-amino-1-(5-phospho-beta-D-ribosyl)imidazole + ADP + phosphate + H(+). It functions in the pathway purine metabolism; IMP biosynthesis via de novo pathway; 5-amino-1-(5-phospho-D-ribosyl)imidazole from N(2)-formyl-N(1)-(5-phospho-D-ribosyl)glycinamide: step 2/2. This Clostridium kluyveri (strain NBRC 12016) protein is Phosphoribosylformylglycinamidine cyclo-ligase.